A 160-amino-acid chain; its full sequence is Large ribosomal subunit protein uL16 (160 aa).

It belongs to the universal ribosomal protein uL16 family. As to quaternary structure, part of the 50S ribosomal subunit.

In terms of biological role, binds 23S rRNA and is also seen to make contacts with the A and possibly P site tRNAs. This Prochlorococcus marinus (strain MIT 9301) protein is Large ribosomal subunit protein uL16.